The sequence spans 267 residues: Indole-3-glycerol phosphate synthase (267 aa).

Belongs to the TrpC family.

The catalysed reaction is 1-(2-carboxyphenylamino)-1-deoxy-D-ribulose 5-phosphate + H(+) = (1S,2R)-1-C-(indol-3-yl)glycerol 3-phosphate + CO2 + H2O. The protein operates within amino-acid biosynthesis; L-tryptophan biosynthesis; L-tryptophan from chorismate: step 4/5. This is Indole-3-glycerol phosphate synthase from Verminephrobacter eiseniae (strain EF01-2).